The sequence spans 158 residues: Transcription elongation factor GreA (158 aa).

It belongs to the GreA/GreB family.

Functionally, necessary for efficient RNA polymerase transcription elongation past template-encoded arresting sites. The arresting sites in DNA have the property of trapping a certain fraction of elongating RNA polymerases that pass through, resulting in locked ternary complexes. Cleavage of the nascent transcript by cleavage factors such as GreA or GreB allows the resumption of elongation from the new 3'terminus. GreA releases sequences of 2 to 3 nucleotides. This Rhizobium johnstonii (strain DSM 114642 / LMG 32736 / 3841) (Rhizobium leguminosarum bv. viciae) protein is Transcription elongation factor GreA.